The chain runs to 540 residues: Putative actin-fragmin kinase DDB_G0287957 (540 aa).

The stretch at 27-68 forms a coiled coil; sequence KNENLNIKNEILNNNNNNNNNKNNNNNNNNNNNIENNSKNEN. Disordered regions lie at residues 37–70 and 317–341; these read ILNNNNNNNNNKNNNNNNNNNNNIENNSKNENFN and NNNNNNNNNNNNNNNNNNNNNINNC.

It belongs to the protein kinase superfamily. AFK Ser/Thr protein kinase family.

This Dictyostelium discoideum (Social amoeba) protein is Putative actin-fragmin kinase DDB_G0287957.